We begin with the raw amino-acid sequence, 162 residues long: Phosphopantetheine adenylyltransferase (162 aa).

Threonine 9 is a substrate binding site. ATP contacts are provided by residues 9–10 (TF) and histidine 17. The substrate site is built by lysine 41, leucine 73, and arginine 87. ATP-binding positions include 88–90 (GLR), glutamate 98, and 123–129 (FAFLSST).

Belongs to the bacterial CoaD family. Homohexamer. The cofactor is Mg(2+).

The protein resides in the cytoplasm. It carries out the reaction (R)-4'-phosphopantetheine + ATP + H(+) = 3'-dephospho-CoA + diphosphate. The protein operates within cofactor biosynthesis; coenzyme A biosynthesis; CoA from (R)-pantothenate: step 4/5. In terms of biological role, reversibly transfers an adenylyl group from ATP to 4'-phosphopantetheine, yielding dephospho-CoA (dPCoA) and pyrophosphate. This Vibrio atlanticus (strain LGP32) (Vibrio splendidus (strain Mel32)) protein is Phosphopantetheine adenylyltransferase.